The primary structure comprises 74 residues: Kappa-scoloptoxin(07)-Ssm2a (74 aa).

The first 19 residues, 1–19 (MLVFYALLFVTVFSNTVMG), serve as a signal peptide directing secretion. The propeptide occupies 20–41 (ATIDKPIPKPILREAIEEIEVN).

The protein belongs to the scoloptoxin-07 family. Contains 3 disulfide bonds. Expressed by the venom gland.

The protein localises to the secreted. Toxin that inhibits voltage-gated potassium channel currents in DRG neurons (IC(50)=about 570 nM). In vivo, induces neurotoxicity shown by twitching, paralysis, and body contraction. In vivo, insects injected with this toxin showed signs of neurotoxicity including twitching, paralysis, and body contraction. This chain is Kappa-scoloptoxin(07)-Ssm2a, found in Scolopendra mutilans (Chinese red-headed centipede).